The sequence spans 92 residues: MCLLRLPVTLLVLCVALNELKATSIASDTGHQVGKRKCNTATCATQRLTNFLVRSSHNLGAALLPTDVGSNTYGKRNAPQISDRELLHYLPL.

The N-terminal stretch at 1-22 is a signal peptide; that stretch reads MCLLRLPVTLLVLCVALNELKA. Positions 23–34 are excised as a propeptide; the sequence is TSIASDTGHQVG. Cys-38 and Cys-43 form a disulfide bridge. Tyr-73 carries the tyrosine amide modification. Positions 77-92 are excised as a propeptide; sequence NAPQISDRELLHYLPL.

This sequence belongs to the calcitonin family. In terms of assembly, can form homodimers. Interacts with IDE and INS. Interaction with INS inhibits homodimerization and fibril formation.

It is found in the secreted. Its function is as follows. Amylin/IAPP is a glucoregulatory peptide hormone that plays an important role in the regulation of energy homeostasis. Selectively inhibits insulin-stimulated glucose utilization and glycogen deposition in muscle, while not affecting adipocyte glucose metabolism. IAPP function is mediated by the CALCR-RAMPs (AMYRs) receptor complexes. Amylin can also bind CALCR receptor in the absence of RAMPs, although it is more selective for AMYRs. The protein is Islet amyloid polypeptide (IAPP) of Cavia porcellus (Guinea pig).